The chain runs to 311 residues: tRNA-cytidine(32) 2-sulfurtransferase (311 aa).

The PP-loop motif signature appears at 47–52 (SGGKDS). The [4Fe-4S] cluster site is built by Cys-122, Cys-125, and Cys-213.

This sequence belongs to the TtcA family. In terms of assembly, homodimer. The cofactor is Mg(2+). [4Fe-4S] cluster serves as cofactor.

It localises to the cytoplasm. The catalysed reaction is cytidine(32) in tRNA + S-sulfanyl-L-cysteinyl-[cysteine desulfurase] + AH2 + ATP = 2-thiocytidine(32) in tRNA + L-cysteinyl-[cysteine desulfurase] + A + AMP + diphosphate + H(+). It participates in tRNA modification. In terms of biological role, catalyzes the ATP-dependent 2-thiolation of cytidine in position 32 of tRNA, to form 2-thiocytidine (s(2)C32). The sulfur atoms are provided by the cysteine/cysteine desulfurase (IscS) system. This Salmonella heidelberg (strain SL476) protein is tRNA-cytidine(32) 2-sulfurtransferase.